Consider the following 211-residue polypeptide: Outer surface protein C (211 aa).

The signal sequence occupies residues 1-18 (MKKNTLSAILMTLFLFIS). Residue C19 is the site of N-palmitoyl cysteine attachment. C19 is lipidated: S-diacylglycerol cysteine.

This sequence belongs to the OspC lipoprotein family. In terms of assembly, homodimer. Interacts with tick I.ricinus salivary protein Iric-1, Iric-2 and Iric-3. Binds human (host) plasminogen.

The protein resides in the cell outer membrane. The protein localises to the cell surface. Functionally, major immunodominant protein in mammalian hosts. Required for initial stages of mammalian infection. Inhibits macrophage-mediated phagocytosis of the bacteria. Binds human plasminogen; this probably confers an extracellular protease activity on the bacteria that allows it to traverse tissue. Interaction with tick I.ricinus salivary protein Salp15 protects the bacteria from antibody-mediated killing in vitro and in vivo. This chain is Outer surface protein C, found in Borreliella burgdorferi (Lyme disease spirochete).